Here is a 285-residue protein sequence, read N- to C-terminus: Acetyl-coenzyme A carboxylase carboxyl transferase subunit beta (285 aa).

In terms of domain architecture, CoA carboxyltransferase N-terminal spans 29–285 (IMTKCPKCKK…ILKIHQEVTK (257 aa)). Cys33, Cys36, Cys52, and Cys55 together coordinate Zn(2+). The C4-type zinc-finger motif lies at 33-55 (CPKCKKIMYTKELAENLNVCFNC).

Belongs to the AccD/PCCB family. Acetyl-CoA carboxylase is a heterohexamer composed of biotin carboxyl carrier protein (AccB), biotin carboxylase (AccC) and two subunits each of ACCase subunit alpha (AccA) and ACCase subunit beta (AccD). Zn(2+) serves as cofactor.

Its subcellular location is the cytoplasm. It carries out the reaction N(6)-carboxybiotinyl-L-lysyl-[protein] + acetyl-CoA = N(6)-biotinyl-L-lysyl-[protein] + malonyl-CoA. It participates in lipid metabolism; malonyl-CoA biosynthesis; malonyl-CoA from acetyl-CoA: step 1/1. Its function is as follows. Component of the acetyl coenzyme A carboxylase (ACC) complex. Biotin carboxylase (BC) catalyzes the carboxylation of biotin on its carrier protein (BCCP) and then the CO(2) group is transferred by the transcarboxylase to acetyl-CoA to form malonyl-CoA. The polypeptide is Acetyl-coenzyme A carboxylase carboxyl transferase subunit beta (Staphylococcus aureus (strain Newman)).